The primary structure comprises 151 residues: Ubiquitin-like protein 4A-B (151 aa).

A Ubiquitin-like domain is found at 1-76 (MILTIKPLQG…LNLVVRPAGE (76 aa)).

Component of the BAT3 complex.

The protein resides in the cytoplasm. It localises to the cytosol. In terms of biological role, component of the BAT3 complex, a multiprotein complex involved in the post-translational delivery of tail-anchored (TA) membrane proteins to the endoplasmic reticulum membrane. TA membrane proteins, also named type II transmembrane proteins, contain a single C-terminal transmembrane region. The polypeptide is Ubiquitin-like protein 4A-B (ubl4ab) (Salmo salar (Atlantic salmon)).